The sequence spans 328 residues: BURP domain-containing protein 11 (328 aa).

Residues 74–318 (FFFRDALRPG…TKLSIVWVPR (245 aa)) form the BURP domain.

As to expression, expressed in roots.

The protein is BURP domain-containing protein 11 (BURP11) of Oryza sativa subsp. japonica (Rice).